Consider the following 168-residue polypeptide: DAZ-associated protein 2 (168 aa).

Over residues 1–13 (MNSKGQYPTQPTY) the composition is skewed to low complexity. A disordered region spans residues 1 to 25 (MNSKGQYPTQPTYPVQPPGNPVYPQ). The PPAY signature appears at 39–42 (PPAY). At serine 77 the chain carries Phosphoserine.

In terms of assembly, interacts with SOX6. Interacts with DAZ1 and DAZL. Interacts with IL17RB. May interact with FAM168B. Interacts with INCA1. Interacts with EIF4G1 and EIF4G2. Interacts (via PPAY motif) with NEDD4 (via WW domains). Interacts with transcription factor TCF4; the interaction results in localization of DAZAP2 to the nucleus. Interacts with transcription factors TCF7 and TCF7L1. Interacts with transcription factor LEF1. Interacts with serine/threonine-protein kinase HIPK2; the interaction results in phosphorylation of DAZAP2 which causes localization of DAZAP2 to the nucleus, reduces interaction of DAZAP2 with HIPK2 and prevents DAZAP2-dependent degradation of HIPK2. Interacts with ubiquitin ligase SIAH1; the interaction is decreased following phosphorylation of DAZAP2 by HIPK2. Interacts with TP53; the interaction is triggered by DNA damage. Ubiquitinated by SMURF2, leading to proteasomal degradation. Ubiquitinated by NEDD4, leading to proteasomal degradation. In terms of processing, following DNA damage, phosphorylated by HIPK2 which promotes DAZAP2 localization to the nucleus, reduces interaction of DAZAP2 with HIPK2 and SIAH1, and prevents DAZAP2-dependent ubiquitination of HIPK2 by E3 ubiquitin-protein ligase SIAH1 and subsequent HIPK2 proteasomal degradation.

The protein localises to the cytoplasm. It is found in the nucleus. It localises to the nucleus speckle. The protein resides in the nuclear body. Its subcellular location is the stress granule. In unstressed cells, promotes SIAH1-mediated polyubiquitination and degradation of the serine/threonine-protein kinase HIPK2, probably by acting as a loading factor that potentiates complex formation between HIPK2 and ubiquitin ligase SIAH1. In response to DNA damage, localizes to the nucleus following phosphorylation by HIPK2 and modulates the expression of a subset of TP53/p53 target genes by binding to TP53 at target gene promoters. This limits the expression of a number of cell death-mediating TP53 target genes, reducing DNA damage-induced cell death. Enhances the binding of transcription factor TCF7L2/TCF4, a Wnt signaling pathway effector, to the promoters of target genes. Plays a role in stress granule formation. This is DAZ-associated protein 2 from Rattus norvegicus (Rat).